A 396-amino-acid polypeptide reads, in one-letter code: Probable porphobilinogen deaminase (396 aa).

The segment at 159–224 (APALHREHER…DTASSSEFEQ (66 aa)) is disordered. An insert region spans residues 159–245 (APALHREHER…LQQSAMERDP (87 aa)). The span at 162 to 189 (LHREHERRTEAEKEAQSRDAREQRRGDY) shows a compositional bias: basic and acidic residues. Acidic residues predominate over residues 200–215 (LDTEDGEEGAADDGDD). At Cys328 the chain carries S-(dipyrrolylmethanemethyl)cysteine.

It belongs to the HMBS family. Requires dipyrromethane as cofactor.

It catalyses the reaction 4 porphobilinogen + H2O = hydroxymethylbilane + 4 NH4(+). The protein operates within porphyrin-containing compound metabolism; protoporphyrin-IX biosynthesis; coproporphyrinogen-III from 5-aminolevulinate: step 2/4. Its function is as follows. Tetrapolymerization of the monopyrrole PBG into the hydroxymethylbilane pre-uroporphyrinogen in several discrete steps. This chain is Probable porphobilinogen deaminase (hemC), found in Halobacterium salinarum (strain ATCC 700922 / JCM 11081 / NRC-1) (Halobacterium halobium).